The chain runs to 414 residues: MKFRSILAIFGDFRPKSLGIALFGAILFSLFIYLHHFGITSPLLYSLLALLALAFYLKLPRESGFAFGFWVGIAWFYWMALSFRYYELTYLIPFILLGIGGVYGVLFSMALYLKNPLVRALLLWLLSHVQPFGFDWMVPEVMLVPSLLDSSKLSFGLILLSLSLFWLLPQRWLKPLPLLLLPFTLYSKPFSPSLPPFEVEIIETHIPQEIRWEREARARIIEENLKRIDAAILEGKALILFPETAFPLLLNKEDWVLEHLAQKSQEIAIITGALRAEEGEIYNSTYFFHQGRIEVADKIVLVPFGEKIPLPDFLVKPLNRLFFGGAQDYRASASKPVDFELHGVKLRNAICYEATSAILYEGSPQFMVVGSNNAWFYPSIEPALQRLLLGYYAREHRTTILHAANRSPSGIIAP.

A run of 6 helical transmembrane segments spans residues Gly19–Ile39, Thr40–Pro60, Ser63–Phe83, Leu91–Leu111, Leu121–Val141, and Leu153–Leu173. The CN hydrolase domain occupies Ile202–Pro414. Glu243 functions as the Proton acceptor in the catalytic mechanism. Residue Lys298 is part of the active site. The Nucleophile role is filled by Cys351.

It belongs to the CN hydrolase family. Apolipoprotein N-acyltransferase subfamily.

It is found in the cell inner membrane. The enzyme catalyses N-terminal S-1,2-diacyl-sn-glyceryl-L-cysteinyl-[lipoprotein] + a glycerophospholipid = N-acyl-S-1,2-diacyl-sn-glyceryl-L-cysteinyl-[lipoprotein] + a 2-acyl-sn-glycero-3-phospholipid + H(+). Its pathway is protein modification; lipoprotein biosynthesis (N-acyl transfer). Functionally, catalyzes the phospholipid dependent N-acylation of the N-terminal cysteine of apolipoprotein, the last step in lipoprotein maturation. The protein is Apolipoprotein N-acyltransferase of Wolinella succinogenes (strain ATCC 29543 / DSM 1740 / CCUG 13145 / JCM 31913 / LMG 7466 / NCTC 11488 / FDC 602W) (Vibrio succinogenes).